A 494-amino-acid polypeptide reads, in one-letter code: WD repeat-containing protein 37 (494 aa).

2 stretches are compositionally biased toward polar residues: residues 1–13 (MPTESASCSTARQ) and 22–31 (SLSIRRTNSS). The segment at 1-50 (MPTESASCSTARQTKQKRKSHSLSIRRTNSSEQERTGLPRDMLEGQDSKL) is disordered. A compositionally biased stretch (basic and acidic residues) spans 32-47 (EQERTGLPRDMLEGQD). WD repeat units follow at residues 154–194 (GHRD…CLVK) and 197–236 (GHVGSVNSIKFHPSEQLALTASGDQTAHIWRYAVQLPTPQ). The tract at residues 237 to 265 (PVADTSISGEDEVECSDKDEPDLDGDVSS) is disordered. Positions 245–263 (GEDEVECSDKDEPDLDGDV) are enriched in acidic residues. WD repeat units lie at residues 279 to 318 (SHQGVVIASDWLVGGKQAVTASWDRTANLYDVETSELVHS), 321 to 360 (GHDQELTHCCTHPTQRLVVTSSRDTTFRLWDFRDPSIHSV), 365 to 403 (GHTDTVTSAVFTVGDNVVSGSDDRTVKVWDLKNMRSPIA), 406 to 445 (RTDSAINRINVCVGQKIIALPHDNRQVRLFDMSGVRLARL), and 452 to 493 (GHRR…LLQE).

As to quaternary structure, forms homodimers. Interacts with PACS1. Interacts with PACS2.

It is found in the cytoplasm. It localises to the nucleus. In terms of biological role, required for normal ER Ca2+ handling in lymphocytes. Together with PACS1, it plays an essential role in stabilizing peripheral lymphocyte populations. The chain is WD repeat-containing protein 37 (WDR37) from Homo sapiens (Human).